A 787-amino-acid chain; its full sequence is Phenylalanine--tRNA ligase beta subunit (787 aa).

In terms of domain architecture, tRNA-binding spans 39–149 (APAFSGVVVA…EDAPVGTNIR (111 aa)). The 76-residue stretch at 400-475 (PEAKQVGLRL…RVYGYENIPD (76 aa)) folds into the B5 domain. Mg(2+)-binding residues include Asp453, Asp459, Glu462, and Glu463. An FDX-ACB domain is found at 694 to 786 (SKFQPVRRDL…VATEAGARLR (93 aa)).

It belongs to the phenylalanyl-tRNA synthetase beta subunit family. Type 1 subfamily. As to quaternary structure, tetramer of two alpha and two beta subunits. Mg(2+) serves as cofactor.

The protein localises to the cytoplasm. It carries out the reaction tRNA(Phe) + L-phenylalanine + ATP = L-phenylalanyl-tRNA(Phe) + AMP + diphosphate + H(+). The protein is Phenylalanine--tRNA ligase beta subunit of Neisseria gonorrhoeae (strain ATCC 700825 / FA 1090).